Here is a 92-residue protein sequence, read N- to C-terminus: DNA-directed RNA polymerase subunit omega (92 aa).

This sequence belongs to the RNA polymerase subunit omega family. In terms of assembly, the RNAP catalytic core consists of 2 alpha, 1 beta, 1 beta' and 1 omega subunit. When a sigma factor is associated with the core the holoenzyme is formed, which can initiate transcription.

The enzyme catalyses RNA(n) + a ribonucleoside 5'-triphosphate = RNA(n+1) + diphosphate. Promotes RNA polymerase assembly. Latches the N- and C-terminal regions of the beta' subunit thereby facilitating its interaction with the beta and alpha subunits. The protein is DNA-directed RNA polymerase subunit omega of Shewanella sp. (strain ANA-3).